A 216-amino-acid polypeptide reads, in one-letter code: Guanylate kinase (216 aa).

Residues 15 to 193 enclose the Guanylate kinase-like domain; it reads GNLFMVVAPS…ALEELRNVVR (179 aa). Residue 22–29 coordinates ATP; sequence APSGAGKS.

The protein belongs to the guanylate kinase family.

The protein localises to the cytoplasm. It catalyses the reaction GMP + ATP = GDP + ADP. Functionally, essential for recycling GMP and indirectly, cGMP. The polypeptide is Guanylate kinase (Cupriavidus pinatubonensis (strain JMP 134 / LMG 1197) (Cupriavidus necator (strain JMP 134))).